The primary structure comprises 377 residues: Succinyl-diaminopimelate desuccinylase (377 aa).

Position 66 (His66) interacts with Zn(2+). Residue Asp68 is part of the active site. Asp99 is a Zn(2+) binding site. Glu133 (proton acceptor) is an active-site residue. Residues Glu134, Glu162, and His348 each contribute to the Zn(2+) site.

The protein belongs to the peptidase M20A family. DapE subfamily. As to quaternary structure, homodimer. Zn(2+) is required as a cofactor. It depends on Co(2+) as a cofactor.

The catalysed reaction is N-succinyl-(2S,6S)-2,6-diaminopimelate + H2O = (2S,6S)-2,6-diaminopimelate + succinate. It functions in the pathway amino-acid biosynthesis; L-lysine biosynthesis via DAP pathway; LL-2,6-diaminopimelate from (S)-tetrahydrodipicolinate (succinylase route): step 3/3. Catalyzes the hydrolysis of N-succinyl-L,L-diaminopimelic acid (SDAP), forming succinate and LL-2,6-diaminopimelate (DAP), an intermediate involved in the bacterial biosynthesis of lysine and meso-diaminopimelic acid, an essential component of bacterial cell walls. This Xylella fastidiosa (strain M23) protein is Succinyl-diaminopimelate desuccinylase.